Reading from the N-terminus, the 191-residue chain is UPF0398 protein LSEI_1479 (191 aa).

Belongs to the UPF0398 family.

The sequence is that of UPF0398 protein LSEI_1479 from Lacticaseibacillus paracasei (strain ATCC 334 / BCRC 17002 / CCUG 31169 / CIP 107868 / KCTC 3260 / NRRL B-441) (Lactobacillus paracasei).